Here is a 144-residue protein sequence, read N- to C-terminus: Transcriptional regulator MraZ (144 aa).

SpoVT-AbrB domains are found at residues 6 to 48 (TYTP…PTDV) and 77 to 120 (ADEG…DPVR).

The protein belongs to the MraZ family. In terms of assembly, forms oligomers.

It is found in the cytoplasm. It localises to the nucleoid. The protein is Transcriptional regulator MraZ of Nocardioides sp. (strain ATCC BAA-499 / JS614).